Consider the following 205-residue polypeptide: Adenylyl-sulfate kinase (205 aa).

31-38 (GLSGAGKS) contacts ATP. The active-site Phosphoserine intermediate is serine 105.

The protein belongs to the APS kinase family.

The catalysed reaction is adenosine 5'-phosphosulfate + ATP = 3'-phosphoadenylyl sulfate + ADP + H(+). It participates in sulfur metabolism; hydrogen sulfide biosynthesis; sulfite from sulfate: step 2/3. Functionally, catalyzes the synthesis of activated sulfate. The polypeptide is Adenylyl-sulfate kinase (Shewanella sp. (strain MR-7)).